The primary structure comprises 373 residues: Alanine dehydrogenase (373 aa).

Substrate contacts are provided by arginine 15 and lysine 74. The active-site Proton donor/acceptor is histidine 95. Residues serine 133, 177 to 178 (QA), aspartate 197, serine 219, 238 to 239 (VL), 266 to 269 (IAID), and 298 to 301 (VANM) each bind NAD(+). Aspartate 269 functions as the Proton donor/acceptor in the catalytic mechanism.

Belongs to the AlaDH/PNT family. In terms of assembly, homohexamer. Trimer of dimer.

The enzyme catalyses L-alanine + NAD(+) + H2O = pyruvate + NH4(+) + NADH + H(+). The protein operates within amino-acid degradation; L-alanine degradation via dehydrogenase pathway; NH(3) and pyruvate from L-alanine: step 1/1. Functionally, catalyzes the reversible reductive amination of pyruvate to L-alanine. May play a role in cell wall synthesis as L-alanine is an important constituent of the peptidoglycan layer. This Staphylococcus haemolyticus (strain JCSC1435) protein is Alanine dehydrogenase (ald).